The chain runs to 886 residues: DNA mismatch repair protein MutS (886 aa).

626-633 lines the ATP pocket; that stretch reads GPNMGGKS.

This sequence belongs to the DNA mismatch repair MutS family.

This protein is involved in the repair of mismatches in DNA. It is possible that it carries out the mismatch recognition step. This protein has a weak ATPase activity. In Burkholderia ambifaria (strain ATCC BAA-244 / DSM 16087 / CCUG 44356 / LMG 19182 / AMMD) (Burkholderia cepacia (strain AMMD)), this protein is DNA mismatch repair protein MutS.